Reading from the N-terminus, the 343-residue chain is Olfactory receptor 1E3 (343 aa).

The Extracellular portion of the chain corresponds to 1-28 (MMKKNQTMISEFLLLGLPIQPEQQNLFY). N-linked (GlcNAc...) asparagine glycosylation occurs at asparagine 5. Residues 29-49 (ALFLAVYLTTLLGNLLVIVLI) traverse the membrane as a helical segment. Topologically, residues 50 to 107 (RLDSHLHMPMYLCLSNLSFSDLCFSSVTMPKLLQNMQSQNPSIPFADCLAQMYFHLFY) are cytoplasmic. A disulfide bridge connects residues cysteine 97 and cysteine 179. Residues 108–128 (GVLESFLLVVMAYHCYVAICF) traverse the membrane as a helical segment. The Extracellular segment spans residues 129–141 (PLHYTTIMSPKCC). The chain crosses the membrane as a helical span at residues 142–162 (LGLLTLSWLLTTAHATLHTLL). Over 163–195 (MARLSFCAENVIPHFFCDTSTLLKLACSNTQVN) the chain is Cytoplasmic. A helical membrane pass occupies residues 196–216 (GWVMFFMGGLILVIPFLLLIM). Residues 217–242 (SCARIVSTILRVPSTGGIQKAFSTCG) lie on the Extracellular side of the membrane. Residues 243 to 263 (PHLSVVSLFYGTIIGLYLCPL) form a helical membrane-spanning segment. The Cytoplasmic segment spans residues 264–271 (TNHNTVKD). A helical membrane pass occupies residues 272–292 (TVMAVMYTGVTHMLNPFIYSL). Residues 293 to 310 (RNRDMRGNPGQSLQHKEN) are Extracellular-facing. Residues 311–331 (FFVFKIVIVGILPLLNLVGVV) form a helical membrane-spanning segment. Residues 332–343 (KLIMKYHSKSVA) are Cytoplasmic-facing.

This sequence belongs to the G-protein coupled receptor 1 family.

Its subcellular location is the cell membrane. Functionally, odorant receptor. The polypeptide is Olfactory receptor 1E3 (OR1E3) (Homo sapiens (Human)).